A 117-amino-acid chain; its full sequence is Immunoglobulin heavy variable 3-30-3 (117 aa).

Positions 1-19 are cleaved as a signal peptide; sequence MEFGLSWVFLVALLRGVQC. The residue at position 20 (Gln20) is a Pyrrolidone carboxylic acid. Residues 20-44 are framework-1; the sequence is QVQLVESGGGVVQPGRSLRLSCAAS. Residues 20 to 117 enclose the Ig-like domain; the sequence is QVQLVESGGG…EDTAVYYCAR (98 aa). Cys41 and Cys115 form a disulfide bridge. A complementarity-determining-1 region spans residues 45 to 52; the sequence is GFTFSSYA. A framework-2 region spans residues 53 to 69; sequence MHWVRQAPGKGLEWVAV. A complementarity-determining-2 region spans residues 70–77; sequence ISYDGSNK. The framework-3 stretch occupies residues 78 to 115; that stretch reads YYADSVKGRFTISRDNSKNTLYLQMNSLRAEDTAVYYC. Residues 116-117 form a complementarity-determining-3 region; it reads AR.

Immunoglobulins are composed of two identical heavy chains and two identical light chains; disulfide-linked.

The protein localises to the secreted. Its subcellular location is the cell membrane. V region of the variable domain of immunoglobulin heavy chains that participates in the antigen recognition. Immunoglobulins, also known as antibodies, are membrane-bound or secreted glycoproteins produced by B lymphocytes. In the recognition phase of humoral immunity, the membrane-bound immunoglobulins serve as receptors which, upon binding of a specific antigen, trigger the clonal expansion and differentiation of B lymphocytes into immunoglobulins-secreting plasma cells. Secreted immunoglobulins mediate the effector phase of humoral immunity, which results in the elimination of bound antigens. The antigen binding site is formed by the variable domain of one heavy chain, together with that of its associated light chain. Thus, each immunoglobulin has two antigen binding sites with remarkable affinity for a particular antigen. The variable domains are assembled by a process called V-(D)-J rearrangement and can then be subjected to somatic hypermutations which, after exposure to antigen and selection, allow affinity maturation for a particular antigen. This is Immunoglobulin heavy variable 3-30-3 from Homo sapiens (Human).